A 470-amino-acid polypeptide reads, in one-letter code: MNPNQKIITIGSISIAIGIISLMLQIGNIISIWASHSIQTGSQNHTGICNQRIITYENSTWVNHTYVNINNTNVVAGKDKTSVTLAGNSSLCSISGWAIYTKDNSIRIGSKGDVFVIREPFISCSHLECKTFFLTQGALLNDKHSNGTVKDRSPYRALMSCPLGEAPSPYNSKFESVAWSASACHDGMGWLTIGISGPDNGAVAVLKYNGIITGTIKSWKKQILRTQESECVCMNGSCFTIMTDGPSNGAASYKIFKIEKGKVTKSIELNAPNFHYEECSCYPDTGTVMCVCRDNWHGSNRPWVSFNQNLDYQIGYICSGVFGDNPRPKDREGSCNPVTIDGADGVKGFSYKYGNGVWIGRTKSNRLRKGFEMIWDPNGWTNTDSDFSVKQDVVAITDWSGYSGSFVQHPELTGLDCIRPCFWVELVRGLPRENTTIWTSGSSISFCGVNSDTANWSWPDGAELPFTIDK.

Residues 1 to 6 (MNPNQK) are Intravirion-facing. A helical transmembrane segment spans residues 7-27 (IITIGSISIAIGIISLMLQIG). Positions 11-33 (GSISIAIGIISLMLQIGNIISIW) are involved in apical transport and lipid raft association. Over 28 to 470 (NIISIWASHS…GAELPFTIDK (443 aa)) the chain is Virion surface. The interval 36–90 (HSIQTGSQNHTGICNQRIITYENSTWVNHTYVNINNTNVVAGKDKTSVTLAGNSS) is hypervariable stalk region. N-linked (GlcNAc...) asparagine; by host glycans are attached at residues N44, N58, N63, N70, and N88. The tract at residues 91 to 470 (LCSISGWAIY…GAELPFTIDK (380 aa)) is head of neuraminidase. Intrachain disulfides connect C92-C417, C124-C129, C184-C231, C233-C238, C279-C292, C281-C290, C318-C335, and C421-C447. R118 is a binding site for substrate. The N-linked (GlcNAc...) asparagine; by host glycan is linked to N146. D151 acts as the Proton donor/acceptor in catalysis. R152 lines the substrate pocket. The N-linked (GlcNAc...) asparagine; by host glycan is linked to N235. A substrate-binding site is contributed by 277-278 (EE). R293 provides a ligand contact to substrate. Ca(2+) is bound by residues D294, G298, and D324. Residue R368 coordinates substrate. The active-site Nucleophile is the Y402. N-linked (GlcNAc...) asparagine; by host glycosylation is found at N434 and N455.

The protein belongs to the glycosyl hydrolase 34 family. In terms of assembly, homotetramer. It depends on Ca(2+) as a cofactor. N-glycosylated.

The protein localises to the virion membrane. The protein resides in the host apical cell membrane. It carries out the reaction Hydrolysis of alpha-(2-&gt;3)-, alpha-(2-&gt;6)-, alpha-(2-&gt;8)- glycosidic linkages of terminal sialic acid residues in oligosaccharides, glycoproteins, glycolipids, colominic acid and synthetic substrates.. Inhibited by the neuraminidase inhibitors zanamivir (Relenza) and oseltamivir (Tamiflu). These drugs interfere with the release of progeny virus from infected cells and are effective against all influenza strains. Resistance to neuraminidase inhibitors is quite rare. Functionally, catalyzes the removal of terminal sialic acid residues from viral and cellular glycoconjugates. Cleaves off the terminal sialic acids on the glycosylated HA during virus budding to facilitate virus release. Additionally helps virus spread through the circulation by further removing sialic acids from the cell surface. These cleavages prevent self-aggregation and ensure the efficient spread of the progeny virus from cell to cell. Otherwise, infection would be limited to one round of replication. Described as a receptor-destroying enzyme because it cleaves a terminal sialic acid from the cellular receptors. May facilitate viral invasion of the upper airways by cleaving the sialic acid moieties on the mucin of the airway epithelial cells. Likely to plays a role in the budding process through its association with lipid rafts during intracellular transport. May additionally display a raft-association independent effect on budding. Plays a role in the determination of host range restriction on replication and virulence. Sialidase activity in late endosome/lysosome traffic seems to enhance virus replication. The chain is Neuraminidase from Influenza A virus (strain A/Russia:St.Petersburg/8/2006 H1N1).